Here is a 371-residue protein sequence, read N- to C-terminus: tRNA-specific 2-thiouridylase MnmA (371 aa).

Residues 13–20 (GMSGGVDS) and Met-39 each bind ATP. The segment at 99-101 (NPD) is interaction with target base in tRNA. The Nucleophile role is filled by Cys-104. A disulfide bridge links Cys-104 with Cys-200. Position 128 (Gly-128) interacts with ATP. An interaction with tRNA region spans residues 150–152 (KDQ). Cys-200 serves as the catalytic Cysteine persulfide intermediate. Residues 308–309 (RY) form an interaction with tRNA region.

It belongs to the MnmA/TRMU family.

It localises to the cytoplasm. The enzyme catalyses S-sulfanyl-L-cysteinyl-[protein] + uridine(34) in tRNA + AH2 + ATP = 2-thiouridine(34) in tRNA + L-cysteinyl-[protein] + A + AMP + diphosphate + H(+). Its function is as follows. Catalyzes the 2-thiolation of uridine at the wobble position (U34) of tRNA, leading to the formation of s(2)U34. This is tRNA-specific 2-thiouridylase MnmA from Bacillus cytotoxicus (strain DSM 22905 / CIP 110041 / 391-98 / NVH 391-98).